Here is a 768-residue protein sequence, read N- to C-terminus: Transferrin receptor protein 1 (768 aa).

The Cytoplasmic segment spans residues 1-68 (MMDQARSAFS…VAKPKRLNGY (68 aa)). Residues 1 to 70 (MMDQARSAFS…KPKRLNGYVC (70 aa)) form a mediates interaction with SH3BP4 region. Phosphoserine is present on residues Ser10 and Ser19. At Tyr20 the chain carries Phosphotyrosine. Positions 20–23 (YTRF) match the Endocytosis signal motif. Thr21 is modified (phosphothreonine). The residue at position 24 (Ser24) is a Phosphoserine. Positions 61–64 (KPKR) match the Stop-transfer sequence motif. The helical transmembrane segment at 69 to 89 (VCYGIIAVITFFLIGFMIGYL) threads the bilayer. Cys70 carries the S-palmitoyl cysteine lipid modification. Topologically, residues 90 to 768 (AYCKRVESKT…GDIWDIDNEF (679 aa)) are extracellular. A PA domain is found at 231–321 (SKATTVTGKL…GTGDPYTPGF (91 aa)). N-linked (GlcNAc...) asparagine glycosylation is found at Asn259 and Asn325. The ligand-binding stretch occupies residues 577–768 (TMDTYDVLSK…GDIWDIDNEF (192 aa)). Positions 654–656 (RGD) match the Cell attachment site motif. N-linked (GlcNAc...) asparagine glycosylation is found at Asn730 and Asn735.

It belongs to the peptidase M28 family. M28B subfamily. In terms of assembly, homodimer; disulfide-linked. Binds one transferrin or HFE molecule per subunit. Interacts with SH3BP4. Interacts with SH3BP3. Interacts with STEAP3; facilitates TFRC endocytosis in erythroid precursor cells. Post-translationally, stearoylated by ZDHHC6 which inhibits TFRC-mediated activation of the JNK pathway and promotes mitochondrial fragmentation. Stearoylation does not affect iron uptake.

It is found in the cell membrane. Its subcellular location is the melanosome. Functionally, cellular uptake of iron occurs via receptor-mediated endocytosis of ligand-occupied transferrin receptor into specialized endosomes. Endosomal acidification leads to iron release. The apotransferrin-receptor complex is then recycled to the cell surface with a return to neutral pH and the concomitant loss of affinity of apotransferrin for its receptor. Transferrin receptor is necessary for development of erythrocytes and the nervous system. Positively regulates T and B cell proliferation through iron uptake. Acts as a lipid sensor that regulates mitochondrial fusion by regulating activation of the JNK pathway. When dietary levels of stearate (C18:0) are low, promotes activation of the JNK pathway, resulting in HUWE1-mediated ubiquitination and subsequent degradation of the mitofusin MFN2 and inhibition of mitochondrial fusion. When dietary levels of stearate (C18:0) are high, TFRC stearoylation inhibits activation of the JNK pathway and thus degradation of the mitofusin MFN2. Mediates uptake of NICOL1 into fibroblasts where it may regulate extracellular matrix production. This chain is Transferrin receptor protein 1 (TFRC), found in Sus scrofa (Pig).